The sequence spans 388 residues: MNIHEYQGKEILRKYGVTTPKGFPCFSVDEAVQAAEKLGGKVWVVKAQIHAGGRGKGGGVKVAKSLDEVRKYANDILGMTLVTHQTGPEGRLVKRLLIEEGADIKKELYVGMVVDRGSQRVALMASSEGGMDIEHVAEHTPEKIHKVFIDPVKGLLDSEADDIARKIGVPEGSIGQARAFMQGLYKAFDETDASLAEINPLIVTGDDRIVALDAKFNFDSNAMYRHPEIQEMRDLDEEDPAEIEASKFDLTYISLDGNIGCLVNGAGLAMATMDVIKLYGGSPANFLDVGGGATTEKVTEAFKIMLKNPDIKAILVNIFGGIMKCDVIAQGVIAAAKQVDLTVPLVVRMAGTNEELGKKILAESGLPIITANNMAEAAEKVVNAAQGK.

An ATP-grasp domain is found at 9–244 (KEILRKYGVT…LDEEDPAEIE (236 aa)). ATP is bound by residues Lys-46, 53-55 (GRG), Glu-99, Ala-102, and Glu-107. Mg(2+) is bound by residues Asn-199 and Asp-213. Substrate is bound by residues Asn-264 and 321–323 (GIM).

It belongs to the succinate/malate CoA ligase beta subunit family. Heterotetramer of two alpha and two beta subunits. It depends on Mg(2+) as a cofactor.

The enzyme catalyses succinate + ATP + CoA = succinyl-CoA + ADP + phosphate. It catalyses the reaction GTP + succinate + CoA = succinyl-CoA + GDP + phosphate. It functions in the pathway carbohydrate metabolism; tricarboxylic acid cycle; succinate from succinyl-CoA (ligase route): step 1/1. In terms of biological role, succinyl-CoA synthetase functions in the citric acid cycle (TCA), coupling the hydrolysis of succinyl-CoA to the synthesis of either ATP or GTP and thus represents the only step of substrate-level phosphorylation in the TCA. The beta subunit provides nucleotide specificity of the enzyme and binds the substrate succinate, while the binding sites for coenzyme A and phosphate are found in the alpha subunit. The sequence is that of Succinate--CoA ligase [ADP-forming] subunit beta from Janthinobacterium sp. (strain Marseille) (Minibacterium massiliensis).